Here is a 159-residue protein sequence, read N- to C-terminus: Ribosomal RNA large subunit methyltransferase H (159 aa).

S-adenosyl-L-methionine contacts are provided by residues Leu-76, Gly-108, and Phe-127–Phe-132.

Belongs to the RNA methyltransferase RlmH family. As to quaternary structure, homodimer.

The protein localises to the cytoplasm. The catalysed reaction is pseudouridine(1915) in 23S rRNA + S-adenosyl-L-methionine = N(3)-methylpseudouridine(1915) in 23S rRNA + S-adenosyl-L-homocysteine + H(+). Its function is as follows. Specifically methylates the pseudouridine at position 1915 (m3Psi1915) in 23S rRNA. The sequence is that of Ribosomal RNA large subunit methyltransferase H from Clostridium botulinum (strain Eklund 17B / Type B).